We begin with the raw amino-acid sequence, 188 residues long: Adenine phosphoribosyltransferase (188 aa).

This sequence belongs to the purine/pyrimidine phosphoribosyltransferase family. In terms of assembly, homodimer.

It localises to the cytoplasm. The enzyme catalyses AMP + diphosphate = 5-phospho-alpha-D-ribose 1-diphosphate + adenine. It participates in purine metabolism; AMP biosynthesis via salvage pathway; AMP from adenine: step 1/1. In terms of biological role, catalyzes a salvage reaction resulting in the formation of AMP, that is energically less costly than de novo synthesis. In Burkholderia lata (strain ATCC 17760 / DSM 23089 / LMG 22485 / NCIMB 9086 / R18194 / 383), this protein is Adenine phosphoribosyltransferase.